Here is an 86-residue protein sequence, read N- to C-terminus: Putative membrane protein insertion efficiency factor (86 aa).

The interval 66 to 86 (AGGHDPVPPVPPQRYPSAQEH) is disordered.

It belongs to the UPF0161 family.

Its subcellular location is the cell inner membrane. Could be involved in insertion of integral membrane proteins into the membrane. The protein is Putative membrane protein insertion efficiency factor of Nitratidesulfovibrio vulgaris (strain ATCC 29579 / DSM 644 / CCUG 34227 / NCIMB 8303 / VKM B-1760 / Hildenborough) (Desulfovibrio vulgaris).